The primary structure comprises 156 residues: Ribosomal RNA large subunit methyltransferase H (156 aa).

Residues L72, G103, and 122–127 (LSSLTL) each bind S-adenosyl-L-methionine.

The protein belongs to the RNA methyltransferase RlmH family. In terms of assembly, homodimer.

Its subcellular location is the cytoplasm. It catalyses the reaction pseudouridine(1915) in 23S rRNA + S-adenosyl-L-methionine = N(3)-methylpseudouridine(1915) in 23S rRNA + S-adenosyl-L-homocysteine + H(+). Specifically methylates the pseudouridine at position 1915 (m3Psi1915) in 23S rRNA. The polypeptide is Ribosomal RNA large subunit methyltransferase H (Dechloromonas aromatica (strain RCB)).